The chain runs to 410 residues: Multifunctional CCA protein (410 aa).

ATP contacts are provided by Gly8 and Arg11. CTP-binding residues include Gly8 and Arg11. Residues Asp21 and Asp23 each coordinate Mg(2+). ATP contacts are provided by Arg91, Arg143, and Arg146. Positions 91, 143, and 146 each coordinate CTP. The HD domain maps to 232–333; the sequence is TGVHVMMVVD…VRLLERSDAI (102 aa).

It belongs to the tRNA nucleotidyltransferase/poly(A) polymerase family. Bacterial CCA-adding enzyme type 1 subfamily. As to quaternary structure, monomer. Can also form homodimers and oligomers. Mg(2+) serves as cofactor. Requires Ni(2+) as cofactor.

The catalysed reaction is a tRNA precursor + 2 CTP + ATP = a tRNA with a 3' CCA end + 3 diphosphate. The enzyme catalyses a tRNA with a 3' CCA end + 2 CTP + ATP = a tRNA with a 3' CCACCA end + 3 diphosphate. Its function is as follows. Catalyzes the addition and repair of the essential 3'-terminal CCA sequence in tRNAs without using a nucleic acid template. Adds these three nucleotides in the order of C, C, and A to the tRNA nucleotide-73, using CTP and ATP as substrates and producing inorganic pyrophosphate. tRNA 3'-terminal CCA addition is required both for tRNA processing and repair. Also involved in tRNA surveillance by mediating tandem CCA addition to generate a CCACCA at the 3' terminus of unstable tRNAs. While stable tRNAs receive only 3'-terminal CCA, unstable tRNAs are marked with CCACCA and rapidly degraded. The chain is Multifunctional CCA protein from Paraburkholderia phytofirmans (strain DSM 17436 / LMG 22146 / PsJN) (Burkholderia phytofirmans).